Here is a 357-residue protein sequence, read N- to C-terminus: Glycerol-3-phosphate dehydrogenase [NAD(P)+] (357 aa).

NADPH-binding residues include Ser-30, Phe-31, Arg-51, and Lys-124. Lys-124 and Gly-152 together coordinate sn-glycerol 3-phosphate. Ala-156 is an NADPH binding site. Lys-207, Asp-260, Ser-270, Arg-271, and Asn-272 together coordinate sn-glycerol 3-phosphate. The active-site Proton acceptor is the Lys-207. NADPH is bound at residue Arg-271. Position 297 (Glu-297) interacts with NADPH.

This sequence belongs to the NAD-dependent glycerol-3-phosphate dehydrogenase family.

The protein localises to the cytoplasm. It carries out the reaction sn-glycerol 3-phosphate + NAD(+) = dihydroxyacetone phosphate + NADH + H(+). The catalysed reaction is sn-glycerol 3-phosphate + NADP(+) = dihydroxyacetone phosphate + NADPH + H(+). The protein operates within membrane lipid metabolism; glycerophospholipid metabolism. Catalyzes the reduction of the glycolytic intermediate dihydroxyacetone phosphate (DHAP) to sn-glycerol 3-phosphate (G3P), the key precursor for phospholipid synthesis. This Acinetobacter baylyi (strain ATCC 33305 / BD413 / ADP1) protein is Glycerol-3-phosphate dehydrogenase [NAD(P)+].